The sequence spans 407 residues: Transmembrane protein 184B (407 aa).

Residues 1 to 24 are disordered; that stretch reads MTVRGAALAPDPASPTTAAASPSI. The next 7 membrane-spanning stretches (helical) occupy residues 40 to 60, 84 to 104, 121 to 141, 178 to 198, 214 to 234, 249 to 269, and 290 to 310; these read FLMTTAAQAISGFFVWTALLI, ILFIVPIYAFDSWLSLLFFTN, LVIYNFLSLCYEYLGGESSIM, LQFCVVKPLMAVSTVVLQAFG, VTIIYNISVSLALYALFLFYF, FFMVKSVIFLSFWQGMLLAIL, and VAAGYQDFIICVEMFFAALAL. The interval 369 to 395 is disordered; sequence TLEPGPTWRGGAHGLSRSHSLSGARDN. Phosphoserine occurs at positions 388, 402, and 403.

This sequence belongs to the TMEM184 family.

Its subcellular location is the membrane. In terms of biological role, may activate the MAP kinase signaling pathway. The sequence is that of Transmembrane protein 184B (TMEM184B) from Bos taurus (Bovine).